A 358-amino-acid chain; its full sequence is 3-ketosteroid-9-alpha-monooxygenase, ferredoxin reductase component (358 aa).

One can recognise an FAD-binding FR-type domain in the interval 12 to 124 (DHVLELQIAE…LAPSGNFVPT (113 aa)). Residues 269–358 (ATAVVELDGQ…SDSVEVTYDE (90 aa)) form the 2Fe-2S ferredoxin-type domain. 4 residues coordinate [2Fe-2S] cluster: cysteine 305, cysteine 310, cysteine 313, and cysteine 343.

Monomer. The two-component system 3-ketosteroid-9-alpha-monooxygenase is composed of an oxygenase component KshA and a reductase component KshB. FAD is required as a cofactor. The cofactor is [2Fe-2S] cluster.

The catalysed reaction is androsta-1,4-diene-3,17-dione + 2 reduced [2Fe-2S]-[ferredoxin] + O2 + 2 H(+) = 9alpha-hydroxyandrosta-1,4-diene-3,17-dione + 2 oxidized [2Fe-2S]-[ferredoxin] + H2O. Its pathway is lipid metabolism; steroid biosynthesis. Its function is as follows. Involved in the degradation of cholesterol. Catalyzes the introduction of a 9a-hydroxyl moiety into 1,4-androstadiene-3,17-dione (ADD) to yield the 9alpha-hydroxy-1,4-androstadiene-3,17-dione (9OHADD) intermediate which spontaneously form 3-hydroxy-9,10-seconandrost-1,3,5(10)-triene-9,17-dione (HSA) via the meta-cleavage of ring B with concomitant aromatization of ring A. The polypeptide is 3-ketosteroid-9-alpha-monooxygenase, ferredoxin reductase component (hmp) (Mycobacterium tuberculosis (strain CDC 1551 / Oshkosh)).